Consider the following 1541-residue polypeptide: WD repeat-containing protein 62 (1541 aa).

Ala-2 is subject to N-acetylalanine. At Ser-33 the chain carries Phosphoserine. Residue Thr-46 is modified to Phosphothreonine. WD repeat units follow at residues 109–150, 153–194, 196–234, 291–330, 357–396, 402–450, 490–529, 532–574, 578–618, 626–665, 671–713, and 714–752; these read TARK…QVAE, GHKY…VVAS, KVSC…EAKV, INLK…YLAN, AVYP…KVGK, FHSS…DSHW, DMKA…ELVR, AHDA…SLEQ, DHSS…DGLH, AEKT…QKKC, GDEG…KMFG, and HSEI…TNCM. The residue at position 501 (Ser-501) is a Phosphoserine. 2 disordered regions span residues 762-820 and 911-1050; these read REQP…KESL and LSQS…LPQT. Positions 770 to 780 are enriched in basic and acidic residues; that stretch reads KDGKWSRDPRQ. Over residues 781–795 the composition is skewed to polar residues; the sequence is ETCTSMPSEISLSPG. A compositionally biased stretch (acidic residues) spans 797–809; that stretch reads QTEDELEEECEPE. The stretch at 803 to 846 is one WD 13 repeat; sequence EEECEPEELLKTPSKESLDSDPRCLLTNGKLPLWAKRLLGDDDV. A compositionally biased stretch (basic and acidic residues) spans 810 to 820; that stretch reads ELLKTPSKESL. The span at 937–948 shows a compositional bias: low complexity; the sequence is VSELLCSLESEV. Ser-943 is subject to Phosphoserine. The span at 1008–1026 shows a compositional bias: pro residues; the sequence is PPRPDPDPPFDVAVPPAPG. Thr-1050 bears the Phosphothreonine mark. Ser-1095, Ser-1125, and Ser-1151 each carry phosphoserine. Disordered stretches follow at residues 1133 to 1153 and 1185 to 1212; these read LAGS…TSPG and SSSS…QGVH. The stretch at 1138–1180 is one WD 14 repeat; that stretch reads PRAEPLRAGTGYTSPGRTNVLSAGKAEEPLEAWSPLTSCLTGL. The segment covering 1193-1202 has biased composition (pro residues); the sequence is DKTPPTPTAL. Phosphoserine is present on residues Ser-1235, Ser-1255, and Ser-1256. The tract at residues 1273–1293 is disordered; the sequence is TVTPSSDSEGQEPALPSRGNH. A Phosphothreonine modification is found at Thr-1275.

In terms of assembly, can form homodimers (via C-terminus). Interacts (via C-terminus) with MAPKBP1 (via C-terminus). Interacts with CDK5RAP2, CEP152, CEP63 and KIAA0753. CEP63, CDK5RAP2, CEP152, WDR62 are proposed to form a stepwise assembled complex at the centrosome forming a ring near parental centrioles.

Its subcellular location is the nucleus. The protein resides in the cytoplasm. It is found in the cytoskeleton. It localises to the spindle pole. The protein localises to the microtubule organizing center. Its subcellular location is the centrosome. The protein resides in the centriole. Functionally, required for cerebral cortical development. Plays a role in neuronal proliferation and migration. Plays a role in mother-centriole-dependent centriole duplication; the function seems also to involve CEP152, CDK5RAP2 and CEP63 through a stepwise assembled complex at the centrosome that recruits CDK2 required for centriole duplication. This Sus scrofa (Pig) protein is WD repeat-containing protein 62 (WDR62).